The primary structure comprises 889 residues: Extended synaptotagmin-3 (889 aa).

Positions 1-65 (MAQGDPGGQT…GPRDPGQGGA (65 aa)) are disordered. The Cytoplasmic segment spans residues 1-66 (MAQGDPGGQT…PRDPGQGGAG (66 aa)). 2 stretches are compositionally biased toward basic and acidic residues: residues 17 to 28 (TDKKPDEPKATE) and 41 to 58 (PGGE…KGPR). 2 helical membrane passes run 67–91 (EALA…FPVY) and 92–112 (LCGR…LWMF). The Cytoplasmic portion of the chain corresponds to 113 to 889 (WTRNKKFKLA…ELTPTGLPTS (777 aa)). Residues 155–333 (DVERVEWLNK…LPNRFTVPLS (179 aa)) enclose the SMP-LTD domain. C2 domains follow at residues 331–452 (PLSS…DEWF) and 468–618 (WLSL…STIK). Residues Lys363, Asp364, Asp376, Asp423, Glu424, Asp425, Asp427, Asp429, and Asp430 each coordinate Ca(2+). Residues 649–724 (SIKRAQSQQH…GAVPESHTPS (76 aa)) form a disordered region. Over residues 658 to 671 (HKSHGKSHQAHHQA) the composition is skewed to basic residues. Low complexity-rich tracts occupy residues 672–682 (HQTQQNHTVQQ) and 691–714 (ISTT…PNST). The C2 3 domain maps to 757-879 (MTGEVEVSVR…DLVKGFTKWF (123 aa)). Residues 804–811 (RKWSGRKK) are required for phosphatidylinositol 4,5-bisphosphate-dependent location at the cell membrane.

The protein belongs to the extended synaptotagmin family.

It is found in the cell membrane. The protein localises to the endoplasmic reticulum membrane. Tethers the endoplasmic reticulum to the cell membrane and promotes the formation of appositions between the endoplasmic reticulum and the cell membrane. Binds glycerophospholipids in a barrel-like domain and may play a role in cellular lipid transport. This Xenopus tropicalis (Western clawed frog) protein is Extended synaptotagmin-3 (esyt3).